A 364-amino-acid polypeptide reads, in one-letter code: tRNA 2-selenouridine synthase (364 aa).

Positions 14-137 constitute a Rhodanese domain; the sequence is LLADTPLIDV…LRQTAIQATW (124 aa). Catalysis depends on C97, which acts as the S-selanylcysteine intermediate.

This sequence belongs to the SelU family. As to quaternary structure, monomer.

It carries out the reaction 5-methylaminomethyl-2-thiouridine(34) in tRNA + selenophosphate + (2E)-geranyl diphosphate + H2O + H(+) = 5-methylaminomethyl-2-selenouridine(34) in tRNA + (2E)-thiogeraniol + phosphate + diphosphate. The enzyme catalyses 5-methylaminomethyl-2-thiouridine(34) in tRNA + (2E)-geranyl diphosphate = 5-methylaminomethyl-S-(2E)-geranyl-thiouridine(34) in tRNA + diphosphate. The catalysed reaction is 5-methylaminomethyl-S-(2E)-geranyl-thiouridine(34) in tRNA + selenophosphate + H(+) = 5-methylaminomethyl-2-(Se-phospho)selenouridine(34) in tRNA + (2E)-thiogeraniol. It catalyses the reaction 5-methylaminomethyl-2-(Se-phospho)selenouridine(34) in tRNA + H2O = 5-methylaminomethyl-2-selenouridine(34) in tRNA + phosphate. In terms of biological role, involved in the post-transcriptional modification of the uridine at the wobble position (U34) of tRNA(Lys), tRNA(Glu) and tRNA(Gln). Catalyzes the conversion of 2-thiouridine (S2U-RNA) to 2-selenouridine (Se2U-RNA). Acts in a two-step process involving geranylation of 2-thiouridine (S2U) to S-geranyl-2-thiouridine (geS2U) and subsequent selenation of the latter derivative to 2-selenouridine (Se2U) in the tRNA chain. In Salmonella enteritidis PT4 (strain P125109), this protein is tRNA 2-selenouridine synthase.